Consider the following 809-residue polypeptide: BTB/POZ domain-containing protein At2g30600 (809 aa).

BTB domains follow at residues 211 to 273 (SDTV…QILE) and 351 to 420 (SDIK…NMED). The BACK domain occupies 466-537 (VVSSISSCKL…LMWCMKAEES (72 aa)).

It participates in protein modification; protein ubiquitination. In terms of biological role, may act as a substrate-specific adapter of an E3 ubiquitin-protein ligase complex (CUL3-RBX1-BTB) which mediates the ubiquitination and subsequent proteasomal degradation of target proteins. In Arabidopsis thaliana (Mouse-ear cress), this protein is BTB/POZ domain-containing protein At2g30600.